The primary structure comprises 457 residues: uncharacterized protein (457 aa).

2 consecutive transmembrane segments (helical) span residues Met-1–Leu-21 and Ile-250–Phe-270.

The protein resides in the membrane. This is an uncharacterized protein from Saccharomyces cerevisiae (strain ATCC 204508 / S288c) (Baker's yeast).